A 238-amino-acid chain; its full sequence is Ditrans,polycis-undecaprenyl-diphosphate synthase ((2E,6E)-farnesyl-diphosphate specific) (238 aa).

Residue aspartate 14 is part of the active site. Aspartate 14 serves as a coordination point for Mg(2+). Residues 15–18, tryptophan 19, arginine 27, histidine 31, and 59–61 contribute to the substrate site; these read GNGR and SSE. Asparagine 62 (proton acceptor) is an active-site residue. Residues tryptophan 63, arginine 65, arginine 182, and 188–190 contribute to the substrate site; that span reads RIS. Glutamate 201 is a binding site for Mg(2+).

This sequence belongs to the UPP synthase family. In terms of assembly, homodimer. Requires Mg(2+) as cofactor.

The enzyme catalyses 8 isopentenyl diphosphate + (2E,6E)-farnesyl diphosphate = di-trans,octa-cis-undecaprenyl diphosphate + 8 diphosphate. Catalyzes the sequential condensation of isopentenyl diphosphate (IPP) with (2E,6E)-farnesyl diphosphate (E,E-FPP) to yield (2Z,6Z,10Z,14Z,18Z,22Z,26Z,30Z,34E,38E)-undecaprenyl diphosphate (di-trans,octa-cis-UPP). UPP is the precursor of glycosyl carrier lipid in the biosynthesis of bacterial cell wall polysaccharide components such as peptidoglycan and lipopolysaccharide. This is Ditrans,polycis-undecaprenyl-diphosphate synthase ((2E,6E)-farnesyl-diphosphate specific) from Legionella pneumophila (strain Paris).